Consider the following 89-residue polypeptide: uncharacterized protein (89 aa).

A helical membrane pass occupies residues 28–50 (LYLDLGFSALLFYNSNLLFSFIL).

It localises to the membrane. This is an uncharacterized protein from Archaeoglobus fulgidus (strain ATCC 49558 / DSM 4304 / JCM 9628 / NBRC 100126 / VC-16).